We begin with the raw amino-acid sequence, 173 residues long: Endoribonuclease YbeY (173 aa).

The Zn(2+) site is built by His-120, His-124, and His-130.

It belongs to the endoribonuclease YbeY family. It depends on Zn(2+) as a cofactor.

The protein localises to the cytoplasm. Functionally, single strand-specific metallo-endoribonuclease involved in late-stage 70S ribosome quality control and in maturation of the 3' terminus of the 16S rRNA. This chain is Endoribonuclease YbeY, found in Kineococcus radiotolerans (strain ATCC BAA-149 / DSM 14245 / SRS30216).